A 428-amino-acid polypeptide reads, in one-letter code: Aspartic protease 10 (428 aa).

The first 16 residues, 1-16, serve as a signal peptide directing secretion; it reads MKTFIALLALLTVVSA. The Peptidase A1 domain occupies 72–425; sequence YMVQISLGSP…DMKSGRLGLA (354 aa). Asp-90 is a catalytic residue. 2 N-linked (GlcNAc...) asparagine glycosylation sites follow: Asn-155 and Asn-191. Residue Asp-318 is part of the active site. Cys-353 and Cys-385 form a disulfide bridge.

This sequence belongs to the peptidase A1 family. In terms of processing, proteolytically cleaved. Synthesized in the intestine. When secreted in low heme conditions, localizes to neurons near the anterior and posterior regions of the body and in coelomocytes.

It localises to the secreted. Functionally, aspartic protease which plays a role in heme homeostasis and mediates inter-organ signaling between the intestine and extra-intestinal tissues when cellular heme levels are low. In Caenorhabditis elegans, this protein is Aspartic protease 10.